Consider the following 2655-residue polypeptide: Probable polyketide synthase 42 (2655 aa).

The 430-residue stretch at 16-445 folds into the Ketosynthase family 3 (KS3) domain; that stretch reads QNGVAVIGVG…GSNCCIILSE (430 aa). Catalysis depends on for beta-ketoacyl synthase activity residues C186, H325, and H368. An acyl/malonyl transferase region spans residues 634 to 667; it reads GIKSDIMVGHSFGEIACSYCSGMVDFKTLCYLTY. The For acyl/malonyl transferase activity role is filled by S644. Residues 926-1059 are N-terminal hotdog fold; the sequence is HPTWKKANKN…ANYSLFKHND (134 aa). In terms of domain architecture, PKS/mFAS DH spans 926–1234; that stretch reads HPTWKKANKN…CKSSIPIIDS (309 aa). H970 acts as the Proton acceptor; for dehydratase activity in catalysis. Residues 1074-1234 are C-terminal hotdog fold; sequence NYTIISKDEL…CKSSIPIIDS (161 aa). D1146 functions as the Proton donor; for dehydratase activity in the catalytic mechanism. The tract at residues 1700–1719 is disordered; that stretch reads YNNNNNNNNNNNNNNNNNNN. The region spanning 2517–2594 is the Carrier domain; the sequence is NENNNIGDLL…TTIEIIIKGY (78 aa). S2554 carries the O-(pantetheine 4'-phosphoryl)serine modification. Residues 2612–2655 are disordered; the sequence is SVVQKETIKDNNENKDDIKIDMDDKKENLKGKKENIDDKKENNN. A compositionally biased stretch (basic and acidic residues) spans 2617–2655; that stretch reads ETIKDNNENKDDIKIDMDDKKENLKGKKENIDDKKENNN. The stretch at 2618 to 2655 forms a coiled coil; it reads TIKDNNENKDDIKIDMDDKKENLKGKKENIDDKKENNN.

The cofactor is pantetheine 4'-phosphate.

Its function is as follows. Probable polyketide synthase. The polypeptide is Probable polyketide synthase 42 (pks42) (Dictyostelium discoideum (Social amoeba)).